The primary structure comprises 332 residues: Probable thc operon regulatory protein (332 aa).

An HTH araC/xylS-type domain is found at 227–328; sequence RLAVDYLEAH…GVSPSEDLRT (102 aa). DNA-binding regions (H-T-H motif) lie at residues 244–265 and 295–318; these read AQVA…QNSL and VTEI…KQTF.

In terms of biological role, probably involved in the positive regulation of the thc operon for the degradation of the thiocarbamate herbicide EPTC. The chain is Probable thc operon regulatory protein (thcR) from Rhodococcus erythropolis (Arthrobacter picolinophilus).